Reading from the N-terminus, the 420-residue chain is Gamma-glutamyl phosphate reductase (420 aa).

Belongs to the gamma-glutamyl phosphate reductase family.

Its subcellular location is the cytoplasm. The enzyme catalyses L-glutamate 5-semialdehyde + phosphate + NADP(+) = L-glutamyl 5-phosphate + NADPH + H(+). Its pathway is amino-acid biosynthesis; L-proline biosynthesis; L-glutamate 5-semialdehyde from L-glutamate: step 2/2. Catalyzes the NADPH-dependent reduction of L-glutamate 5-phosphate into L-glutamate 5-semialdehyde and phosphate. The product spontaneously undergoes cyclization to form 1-pyrroline-5-carboxylate. The chain is Gamma-glutamyl phosphate reductase from Oenococcus oeni (strain ATCC BAA-331 / PSU-1).